The primary structure comprises 670 residues: MSLADLTKTNIDEHFFGVALENNRRSAACKRSPGTGDFSRNSNASNKSVDYSRSQCSCGSLSSQYDYSEDFLCDCSEKAINRNYLKQPVVKEKEKKKYNVSKISQSKGQKEISVEKKHTWNASLFNSQIHMIAQRRDAMAHRILSARLHKIKGLKNELADMHHKLEAILTENQFLKQLQLRHLKAIGKYENSQNNLPQIMAKHQNEVKNLRQLLRKSQEKERTLSRKLRETDSQLLKTKDILQALQKLSEDKNLAEREELTHKLSIITTKMDANDKKIQSLEKQLRLNCRAFSRQLAIETRKTLAAQTATKTLQVEVKHLQQKLKEKDRELEIKNIYSHRILKNLHDTEDYPKVSSTKSVQADRKILPFTSMRHQGTQKSDVPPLTTKGKKATGNIDHKEKSTEINHEIPHCVNKLPKQEDSKRKYEDLSGEEKHLEVQILLENTGRQKDKKEDQEKKNIFVKEEQELPPKIIEVIHPERESNQEDVLVREKFKRSMQRNGVDDTLGKGTAPYTKGPLRQRRHYSFTEATENLHHGLPASGGPANAGNMRYSHSTGKHLSNREEMELEHSDSGYEPSFGKSSRIKVKDTTFRDKKSSLMEELFGSGYVLKTDQSSPGVAKGSEEPLQSKESHPLPPSQASTSHAFGDSKVTVVNSIKPSSPTEGKRKIII.

The disordered stretch occupies residues 30 to 51; it reads KRSPGTGDFSRNSNASNKSVDY. The segment covering 38–51 has biased composition (polar residues); the sequence is FSRNSNASNKSVDY. Coiled-coil stretches lie at residues 148–259 and 305–336; these read LHKI…EREE and AAQT…IKNI. The tract at residues 374–393 is disordered; the sequence is HQGTQKSDVPPLTTKGKKAT. The stretch at 420–440 forms a coiled coil; the sequence is EDSKRKYEDLSGEEKHLEVQI. Disordered regions lie at residues 495-516, 557-580, and 609-670; these read RSMQ…YTKG, KHLS…SFGK, and LKTD…KIII. Basic and acidic residues-rich tracts occupy residues 560 to 572 and 621 to 632; these read SNRE…HSDS and GSEEPLQSKESH. Positions 651-662 are enriched in polar residues; it reads TVVNSIKPSSPT.

The protein belongs to the LCA5 family.

The chain is Lebercilin-like protein (LCA5L) from Homo sapiens (Human).